The primary structure comprises 525 residues: Polyamine aminopropyltransferase 1 (525 aa).

Transmembrane regions (helical) follow at residues 21–41 (ALLV…ELIA), 53–73 (ILQF…GSWV), 89–109 (LELL…LLFA), 117–137 (LVLY…IPLV), 155–175 (VLTF…LVLA), and 180–200 (LVRT…WTLW). Residues 220 to 464 (AGMVGAALLA…GEWGFILAAP (245 aa)) form the PABS domain. Positions 222–471 (MVGAALLAGF…AAPGRADFRP (250 aa)) are spermidine synthase. Position 259 (glutamine 259) interacts with S-methyl-5'-thioadenosine. Spermidine-binding residues include histidine 289 and aspartate 313. Residues aspartate 333 and 367-368 (DA) each bind S-methyl-5'-thioadenosine. Catalysis depends on aspartate 385, which acts as the Proton acceptor.

This sequence belongs to the spermidine/spermine synthase family. As to quaternary structure, homodimer or homotetramer.

The protein resides in the cell membrane. It catalyses the reaction S-adenosyl 3-(methylsulfanyl)propylamine + putrescine = S-methyl-5'-thioadenosine + spermidine + H(+). It participates in amine and polyamine biosynthesis; spermidine biosynthesis; spermidine from putrescine: step 1/1. In terms of biological role, catalyzes the irreversible transfer of a propylamine group from the amino donor S-adenosylmethioninamine (decarboxy-AdoMet) to putrescine (1,4-diaminobutane) to yield spermidine. This is Polyamine aminopropyltransferase 1 from Ralstonia nicotianae (strain ATCC BAA-1114 / GMI1000) (Ralstonia solanacearum).